Reading from the N-terminus, the 528-residue chain is Probable feruloyl esterase B-1 (528 aa).

Positions 1–19 are cleaved as a signal peptide; the sequence is MMWWFLLIGLASAAATASS. 6 disulfides stabilise this stretch: C29–C78, C64–C117, C190–C445, C259–C276, C285–C295, and C505–C527. N-linked (GlcNAc...) asparagine glycans are attached at residues N83 and N101. S191 serves as the catalytic Acyl-ester intermediate. Ca(2+)-binding residues include D260, D263, A265, D267, and I269. N-linked (GlcNAc...) asparagine glycans are attached at residues N286, N354, and N385. Residues D404 and H444 each act as charge relay system in the active site.

Belongs to the tannase family.

The protein localises to the secreted. The catalysed reaction is feruloyl-polysaccharide + H2O = ferulate + polysaccharide.. In terms of biological role, involved in degradation of plant cell walls. Hydrolyzes the feruloyl-arabinose ester bond in arabinoxylans as well as the feruloyl-galactose and feruloyl-arabinose ester bonds in pectin. The chain is Probable feruloyl esterase B-1 (faeB-1) from Aspergillus fumigatus (strain ATCC MYA-4609 / CBS 101355 / FGSC A1100 / Af293) (Neosartorya fumigata).